The chain runs to 131 residues: UPF0342 protein DSY1594 (131 aa).

Belongs to the UPF0342 family.

The polypeptide is UPF0342 protein DSY1594 (Desulfitobacterium hafniense (strain Y51)).